Reading from the N-terminus, the 274-residue chain is Karrikin insensitive 2 receptor IA (274 aa).

The Nucleophile role is filled by Ser95. Residues Asp217 and His246 contribute to the active site.

Belongs to the AB hydrolase superfamily. As to quaternary structure, interacts with MAX2A and MAX2B in the presence of (-)-germacrene D, thus forming an E3 SCF ubiquitin ligase complex (ASK-cullin-F-box) containing MAX2A or MAX2B and KAI2IA recognizing SMAX1A; this leads to the subsequent degradation of the transcriptional corepressor SMAX1A, thus triggering the activation of a downstream signaling cascade. In terms of tissue distribution, strongly expressed in stigma.

The protein localises to the nucleus. It localises to the cytoplasm. Hydrolysis activity toward yoshimulactone green (YLG), a fluorescent agonist to strigolactone receptor, is inhibited by (-)-germacrene D and GR24, a synthetic strigolactone analog. Hydrolase involved in the olfaction of sesquiterpene volatile organic compounds (VOCs) during volatile plant communication in a MAX2 proteins-dependent manner. Acts as a karrikin-insensitive receptor that stereospecifically perceives and binds to (-)-germacrene D, particularly in stigmas, and triggers a signaling cascade influencing plant fitness, as the result of reproductive organ growth-promoting effect; this process involves an interaction with MAX2 proteins (e.g. MAX2A and MAX2B) and the subsequent degradation of SMAX1a, a transcriptional corepressor. The protein is Karrikin insensitive 2 receptor IA of Petunia hybrida (Petunia).